A 934-amino-acid polypeptide reads, in one-letter code: Protein translocase subunit SecA (934 aa).

ATP contacts are provided by residues Gln90, 108–112 (GEGKT), and Asp509. Residues 535–565 (PEEDHTPPVPLQRSAPGGFSDAAAPSLPRSG) form a disordered region.

The protein belongs to the SecA family. As to quaternary structure, monomer and homodimer. Part of the essential Sec protein translocation apparatus which comprises SecA, SecYEG and auxiliary proteins SecDF. Other proteins may also be involved.

The protein localises to the cell inner membrane. Its subcellular location is the cellular thylakoid membrane. The protein resides in the cytoplasm. It carries out the reaction ATP + H2O + cellular proteinSide 1 = ADP + phosphate + cellular proteinSide 2.. Functionally, part of the Sec protein translocase complex. Interacts with the SecYEG preprotein conducting channel. Has a central role in coupling the hydrolysis of ATP to the transfer of proteins into and across the cell membrane, serving as an ATP-driven molecular motor driving the stepwise translocation of polypeptide chains across the membrane. Its function is as follows. Probably participates in protein translocation into and across both the cytoplasmic and thylakoid membranes in cyanobacterial cells. In Synechococcus sp. (strain CC9605), this protein is Protein translocase subunit SecA.